The primary structure comprises 65 residues: UPF0434 protein CPS_2127 (65 aa).

Belongs to the UPF0434 family.

The chain is UPF0434 protein CPS_2127 from Colwellia psychrerythraea (strain 34H / ATCC BAA-681) (Vibrio psychroerythus).